Here is a 340-residue protein sequence, read N- to C-terminus: MTVSENAYAKSGVDVEAGYEVVSRIKKHVAKTERLGVLGALGGFGGSFDLSVLDVKEPVLISGTDGVGTKLMLAIRADKHDTIGIDCVAMCVNDIIAAGAEPLYFLDYIATGKNIPEKLEQVVAGVAEGCLQAGAALIGGETAEMPGMYDEDDYDLAGFAVGVAEKSQLIDGEKDVEAGDVLLGLASSGIHSNGYSLVRKVFADFDLNESLPELDQSLIDTLLTPTKIYVKELLPLIKQNKIKGIAHITGGGFHENLPRMFGNSLSAEIVEGSWDVLPIFKALEKYGSIKHEEMYEIFNMGIGMVIAVAPENAAALKKELNAFEIGQMVNRQEAPVVIKK.

It belongs to the AIR synthase family.

Its subcellular location is the cytoplasm. It carries out the reaction 2-formamido-N(1)-(5-O-phospho-beta-D-ribosyl)acetamidine + ATP = 5-amino-1-(5-phospho-beta-D-ribosyl)imidazole + ADP + phosphate + H(+). It functions in the pathway purine metabolism; IMP biosynthesis via de novo pathway; 5-amino-1-(5-phospho-D-ribosyl)imidazole from N(2)-formyl-N(1)-(5-phospho-D-ribosyl)glycinamide: step 2/2. The protein is Phosphoribosylformylglycinamidine cyclo-ligase of Lactococcus lactis subsp. cremoris (strain MG1363).